The primary structure comprises 230 residues: Demethylmenaquinone methyltransferase (230 aa).

Residues Thr62, Asp80, 100–101 (DA), and Ser117 contribute to the S-adenosyl-L-methionine site.

Belongs to the class I-like SAM-binding methyltransferase superfamily. MenG/UbiE family.

It catalyses the reaction a 2-demethylmenaquinol + S-adenosyl-L-methionine = a menaquinol + S-adenosyl-L-homocysteine + H(+). Its pathway is quinol/quinone metabolism; menaquinone biosynthesis; menaquinol from 1,4-dihydroxy-2-naphthoate: step 2/2. Its function is as follows. Methyltransferase required for the conversion of demethylmenaquinol (DMKH2) to menaquinol (MKH2). This Mycolicibacterium paratuberculosis (strain ATCC BAA-968 / K-10) (Mycobacterium paratuberculosis) protein is Demethylmenaquinone methyltransferase.